Here is a 189-residue protein sequence, read N- to C-terminus: 3-isopropylmalate dehydratase small subunit (189 aa).

This sequence belongs to the LeuD family. LeuD type 1 subfamily. As to quaternary structure, heterodimer of LeuC and LeuD.

The enzyme catalyses (2R,3S)-3-isopropylmalate = (2S)-2-isopropylmalate. The protein operates within amino-acid biosynthesis; L-leucine biosynthesis; L-leucine from 3-methyl-2-oxobutanoate: step 2/4. Its function is as follows. Catalyzes the isomerization between 2-isopropylmalate and 3-isopropylmalate, via the formation of 2-isopropylmaleate. This is 3-isopropylmalate dehydratase small subunit from Francisella tularensis subsp. holarctica (strain FTNF002-00 / FTA).